A 37-amino-acid polypeptide reads, in one-letter code: Large ribosomal subunit protein bL36B (37 aa).

The protein belongs to the bacterial ribosomal protein bL36 family.

This is Large ribosomal subunit protein bL36B from Paenarthrobacter aurescens (strain TC1).